The primary structure comprises 112 residues: Nucleoid-associated protein FTN_1196 (112 aa).

Residues 1 to 27 (MNFDMSKLMQQAQKMQEQMKKAQQERE) form a disordered region. Over residues 17-27 (EQMKKAQQERE) the composition is skewed to basic and acidic residues.

It belongs to the YbaB/EbfC family. As to quaternary structure, homodimer.

The protein resides in the cytoplasm. It localises to the nucleoid. Binds to DNA and alters its conformation. May be involved in regulation of gene expression, nucleoid organization and DNA protection. This is Nucleoid-associated protein FTN_1196 from Francisella tularensis subsp. novicida (strain U112).